Here is a 114-residue protein sequence, read N- to C-terminus: Putative toxin HigB3 (114 aa).

Belongs to the mycobacterial HigB family.

Functionally, putative toxic component of a type II toxin-antitoxin (TA) system. Its cognate antitoxin would be HigA3. Not toxic upon expression in M.smegmatis. This is Putative toxin HigB3 from Mycobacterium tuberculosis (strain ATCC 25618 / H37Rv).